The primary structure comprises 228 residues: Urease accessory protein UreF 1 (228 aa).

Belongs to the UreF family. UreD, UreF and UreG form a complex that acts as a GTP-hydrolysis-dependent molecular chaperone, activating the urease apoprotein by helping to assemble the nickel containing metallocenter of UreC. The UreE protein probably delivers the nickel.

Its subcellular location is the cytoplasm. Functionally, required for maturation of urease via the functional incorporation of the urease nickel metallocenter. In terms of biological role, disruption of the ure1 gene cluster suggests that it protects brucellae during their passage through the stomach. The major route of infection in human brucellosis is oral. This Brucella abortus (strain 2308) protein is Urease accessory protein UreF 1.